The following is a 356-amino-acid chain: MQTLHALLRDIPAPDAEAMARAQQHIDGLLKPPGSLGRLETLAVQLAGMPGLNGTPQVGEKAVLVMCADHGVWDEGVAVSPKIVTAIQAANMTQGTTGVCVLAAQAGAKVHVIDVGIDAEPIPGVVDMRVARGCGNIAVGPAMSRSQAEALLLEVSRYTCDLAKRGVTLFGVGELGMANTTPAAAMVSVFTGSDAKEVVGIGANLPPSRIDNKVDVVRRAIAINQPNPRDGIDVLSKVGGFDLVGMTGVMLGAARCGLPVLLDGFLSYSAALAACQIAPAVRPYLIPSHFSAEKGARIALAHLSMEPYLHMAMRLGEGSGAALAMPIVEAACAMFHNMGELAASNIVLPEGNANAT.

The active-site Proton acceptor is Glu317.

Belongs to the CobT family. Homodimer.

The enzyme catalyses 5,6-dimethylbenzimidazole + nicotinate beta-D-ribonucleotide = alpha-ribazole 5'-phosphate + nicotinate + H(+). It participates in nucleoside biosynthesis; alpha-ribazole biosynthesis; alpha-ribazole from 5,6-dimethylbenzimidazole: step 1/2. In terms of biological role, catalyzes the synthesis of alpha-ribazole-5'-phosphate from nicotinate mononucleotide (NAMN) and 5,6-dimethylbenzimidazole (DMB). The protein is Nicotinate-nucleotide--dimethylbenzimidazole phosphoribosyltransferase of Salmonella paratyphi A (strain AKU_12601).